The primary structure comprises 327 residues: GMP reductase (327 aa).

The active-site Thioimidate intermediate is the Cys-176. 205-228 (IIADGGIRTHGDIAKSIRFGASMV) provides a ligand contact to NADP(+).

This sequence belongs to the IMPDH/GMPR family. GuaC type 2 subfamily.

It catalyses the reaction IMP + NH4(+) + NADP(+) = GMP + NADPH + 2 H(+). In terms of biological role, catalyzes the irreversible NADPH-dependent deamination of GMP to IMP. It functions in the conversion of nucleobase, nucleoside and nucleotide derivatives of G to A nucleotides, and in maintaining the intracellular balance of A and G nucleotides. This Streptococcus suis (strain 05ZYH33) protein is GMP reductase.